Reading from the N-terminus, the 245-residue chain is 1-(5-phosphoribosyl)-5-[(5-phosphoribosylamino)methylideneamino] imidazole-4-carboxamide isomerase (245 aa).

Catalysis depends on Asp7, which acts as the Proton acceptor. Asp129 acts as the Proton donor in catalysis.

It belongs to the HisA/HisF family.

The protein resides in the cytoplasm. It catalyses the reaction 1-(5-phospho-beta-D-ribosyl)-5-[(5-phospho-beta-D-ribosylamino)methylideneamino]imidazole-4-carboxamide = 5-[(5-phospho-1-deoxy-D-ribulos-1-ylimino)methylamino]-1-(5-phospho-beta-D-ribosyl)imidazole-4-carboxamide. It participates in amino-acid biosynthesis; L-histidine biosynthesis; L-histidine from 5-phospho-alpha-D-ribose 1-diphosphate: step 4/9. The polypeptide is 1-(5-phosphoribosyl)-5-[(5-phosphoribosylamino)methylideneamino] imidazole-4-carboxamide isomerase (Yersinia pestis bv. Antiqua (strain Antiqua)).